The primary structure comprises 220 residues: Octanoyltransferase (220 aa).

The 182-residue stretch at 27–208 (PGTADEIWLC…QLARAHGQAV (182 aa)) folds into the BPL/LPL catalytic domain. Residues 66 to 73 (RGGQVTYH), 139 to 141 (ALG), and 152 to 154 (GLA) contribute to the substrate site. Residue Cys-170 is the Acyl-thioester intermediate of the active site.

This sequence belongs to the LipB family.

The protein localises to the cytoplasm. The enzyme catalyses octanoyl-[ACP] + L-lysyl-[protein] = N(6)-octanoyl-L-lysyl-[protein] + holo-[ACP] + H(+). The protein operates within protein modification; protein lipoylation via endogenous pathway; protein N(6)-(lipoyl)lysine from octanoyl-[acyl-carrier-protein]: step 1/2. Its function is as follows. Catalyzes the transfer of endogenously produced octanoic acid from octanoyl-acyl-carrier-protein onto the lipoyl domains of lipoate-dependent enzymes. Lipoyl-ACP can also act as a substrate although octanoyl-ACP is likely to be the physiological substrate. This chain is Octanoyltransferase, found in Bordetella pertussis (strain Tohama I / ATCC BAA-589 / NCTC 13251).